A 359-amino-acid chain; its full sequence is Serum paraoxonase/arylesterase 1 (359 aa).

The cysteines at positions 42 and 353 are disulfide-linked. An N-linked (GlcNAc...) asparagine glycan is attached at Asn50. 2 residues coordinate Ca(2+): Glu53 and Asp54. His115 functions as the Proton acceptor in the catalytic mechanism. Positions 117, 168, 169, and 224 each coordinate Ca(2+). The N-linked (GlcNAc...) asparagine glycan is linked to Asn253. Residues Asp269 and Asn270 each coordinate Ca(2+). Asn270 and Asn324 each carry an N-linked (GlcNAc...) asparagine glycan.

This sequence belongs to the paraoxonase family. Homodimer. Interacts with CLU. It depends on Ca(2+) as a cofactor. Glycosylated. In terms of processing, the signal sequence is not cleaved. As to expression, plasma. Associated with HDL.

Its subcellular location is the secreted. It is found in the extracellular space. It carries out the reaction a phenyl acetate + H2O = a phenol + acetate + H(+). The catalysed reaction is An aryl dialkyl phosphate + H2O = dialkyl phosphate + an aryl alcohol.. It catalyses the reaction an N-acyl-L-homoserine lactone + H2O = an N-acyl-L-homoserine + H(+). Its function is as follows. Hydrolyzes the toxic metabolites of a variety of organophosphorus insecticides. Capable of hydrolyzing a broad spectrum of organophosphate substrates and lactones, and a number of aromatic carboxylic acid esters. Mediates an enzymatic protection of low density lipoproteins against oxidative modification. The chain is Serum paraoxonase/arylesterase 1 (PON1) from Oryctolagus cuniculus (Rabbit).